The sequence spans 157 residues: MKEELVVRRISDGTVIDHIPAGRALRVLKLLGITGERDGVVALVMNVPSKKLGKKDIVKIEGRELSKEEVDKISLIAPSATINIIRNFEVASKRRVELPRRVVGILRCLNPNCVTNAPREAVEPSFTLISESPLRMVCEYCGEYLREEDIIEQLSGV.

Residues Cys108, Cys113, Cys138, and Cys141 each coordinate Zn(2+).

Belongs to the PyrI family. As to quaternary structure, contains catalytic and regulatory chains. The cofactor is Zn(2+).

Functionally, involved in allosteric regulation of aspartate carbamoyltransferase. The sequence is that of Aspartate carbamoyltransferase regulatory chain from Korarchaeum cryptofilum (strain OPF8).